The following is a 159-amino-acid chain: 17 kDa surface antigen (159 aa).

A signal peptide spans 1 to 19; it reads MKLLSKIMIIALAASMLQA. Residue cysteine 20 is the site of N-palmitoyl cysteine attachment. A lipid anchor (S-diacylglycerol cysteine) is attached at cysteine 20.

The protein belongs to the rickettsiale 17 kDa surface antigen family.

Its subcellular location is the cell outer membrane. The polypeptide is 17 kDa surface antigen (omp) (Rickettsia prowazekii (strain Madrid E)).